A 61-amino-acid chain; its full sequence is Temporin-CDYa (61 aa).

An N-terminal signal peptide occupies residues 1-22 (MFPLKKSLLLLFFLGTINFSFC). A propeptide spanning residues 23–44 (EEERNAEEERRDDPEERDVAME) is cleaved from the precursor. Leu59 carries the leucine amide modification.

Belongs to the frog skin active peptide (FSAP) family. Temporin subfamily. Expressed by the skin glands.

The protein localises to the secreted. Functionally, antimicrobial peptide. This chain is Temporin-CDYa, found in Rana dybowskii (Dybovsky's frog).